A 228-amino-acid polypeptide reads, in one-letter code: Ephrin-A5 (228 aa).

The signal sequence occupies residues 1-20; sequence MPHVEMLLLAVAALWVCVRG. In terms of domain architecture, Ephrin RBD spans 29–162; the sequence is ADRYAVYWNS…KLKVFVRPAN (134 aa). N-linked (GlcNAc...) asparagine glycosylation occurs at Asn-37. Cystine bridges form between Cys-62/Cys-102 and Cys-90/Cys-151. A lipid anchor (GPI-anchor amidated asparagine) is attached at Asn-203. Positions 204–228 are cleaved as a propeptide — removed in mature form; that stretch reads AAQTPRIPIRLLATLLFLLAMLLIL.

It belongs to the ephrin family. Expressed in a graded fashion across the tectum being more strongly expressed towards the posterior pole.

The protein resides in the cell membrane. Functionally, cell surface GPI-bound ligand for Eph receptors, a family of receptor tyrosine kinases which are crucial for migration, repulsion and adhesion during neuronal, vascular and epithelial development. Binds promiscuously Eph receptors residing on adjacent cells, leading to contact-dependent bidirectional signaling into neighboring cells. Induces compartmentalized signaling within a caveolae-like membrane microdomain when bound to the extracellular domain of its cognate receptor. This signaling event requires the activity of the Fyn tyrosine kinase. Activates the EPHA3 receptor to regulate cell-cell adhesion and cytoskeletal organization. With the receptor EPHA2 may regulate lens fiber cells shape and interactions and be important for lens transparency maintenance. May function actively to stimulate axon fasciculation. Induces growth cone collapse and repulsion of retinal ganglion cell axons. This is Ephrin-A5 (EFNA5) from Gallus gallus (Chicken).